A 263-amino-acid chain; its full sequence is Reductase pytE (263 aa).

This sequence belongs to the avfA family.

It participates in secondary metabolite biosynthesis. In terms of biological role, reductase; part of the gene cluster that mediates the biosynthesis of pyranterreones, a family of antioxidative compounds. The first step of pyranonigrins biosynthesis is performed by the hybrid PKS-NRPS synthetase pytA that condenses 4 malonyl-CoA units ato the acetyl starter unit by the modular PKS of pytA. The acyl chain is then connected to an L-serine through the amide bond by the modular NRPS of pytA. A tetramic acid is formed and released from the PKS-NRPS pytA to give pyranterreone 5 with the help of the thioesterase pytI. Pyranterreone 5 could be methylated by pytC to afford pyranterreone 6. Both pyranterreones 5 and 6 are subsequently oxidized by the FAD-linked oxidoreductase pytB and the cytochrome P450 monooxygenase pytD to form the fused gamma-pyrone core, resulting in pyranterreones 7 and 11, respectively. The hydroxy group at C-8 of pyranterreones 7 and 11 are dehydrated by the aspartyl protease pytH to form a delta-7 double bond to give pyranterreones 3 and 1, 2 accordingly. The exo-methylene of pyranterreone 3 could be reduced into a pendant methyl by reductase pytE to provide pyranterreone 4, also known as cordylactam. Pyranterreone 4 can be reconverted to pyranterreone 3 through pytB-catalyzed dehydrogenation or further oxidized to pyranterreones 9 and 10. In Aspergillus terreus, this protein is Reductase pytE.